The chain runs to 124 residues: U-scoloptoxin-Er5d (124 aa).

An N-terminal signal peptide occupies residues 1–22 (MKTNCEFPLLCLLIVLVANVEG). Positions 23–94 (EVEDNELKMV…KRLWRNWERR (72 aa)) are excised as a propeptide. RLWRNWE repeat units follow at residues 34–40 (RLWRNWE), 61–67 (RLWRNWE), and 86–92 (RLWRNWE). Q95 is modified (pyrrolidone carboxylic acid). Residues 107–113 (ELWRNWE) form an RLWRNWE 4; approximate repeat. The propeptide occupies 112-124 (WEDLKRRQVGRFE).

The protein belongs to the scoloptoxin-08 family. In terms of tissue distribution, expressed by the venom gland.

The protein resides in the secreted. The protein is U-scoloptoxin-Er5d of Ethmostigmus rubripes (Giant centipede).